An 831-amino-acid chain; its full sequence is Prickle-like protein 1 (831 aa).

Residues Phe14–Met122 enclose the PET domain. 3 consecutive LIM zinc-binding domains span residues Ala124 to Pro189, Pro189 to Glu249, and Glu249 to His313. The tract at residues Ala314–Cys346 is disordered. Phosphoserine occurs at positions 315, 591, and 594. Disordered regions lie at residues Glu664 to Asn688 and Cys763 to Ser831. The segment covering Arg669–Lys680 has biased composition (basic residues). Position 683 is a phosphoserine (Ser683). Residues Asp797–Gln812 are compositionally biased toward polar residues. Basic residues predominate over residues Thr815–Ser831. Cys828 carries the cysteine methyl ester modification. Cys828 carries S-farnesyl cysteine lipidation. A propeptide spans Ile829–Ser831 (removed in mature form).

This sequence belongs to the prickle / espinas / testin family. In terms of assembly, interacts with REST.

It is found in the nucleus membrane. The protein resides in the cytoplasm. It localises to the cytosol. Involved in the planar cell polarity pathway that controls convergent extension during gastrulation and neural tube closure. Convergent extension is a complex morphogenetic process during which cells elongate, move mediolaterally, and intercalate between neighboring cells, leading to convergence toward the mediolateral axis and extension along the anteroposterior axis. Necessary for nuclear localization of REST. May serve as nuclear receptor. This chain is Prickle-like protein 1 (Prickle1), found in Rattus norvegicus (Rat).